A 211-amino-acid polypeptide reads, in one-letter code: Holliday junction resolvase RecU (211 aa).

The Mg(2+) site is built by threonine 95, aspartate 97, glutamate 110, and glutamine 129.

The protein belongs to the RecU family. Mg(2+) is required as a cofactor.

It localises to the cytoplasm. The enzyme catalyses Endonucleolytic cleavage at a junction such as a reciprocal single-stranded crossover between two homologous DNA duplexes (Holliday junction).. Functionally, endonuclease that resolves Holliday junction intermediates in genetic recombination. Cleaves mobile four-strand junctions by introducing symmetrical nicks in paired strands. Promotes annealing of linear ssDNA with homologous dsDNA. Required for DNA repair, homologous recombination and chromosome segregation. This is Holliday junction resolvase RecU from Lactobacillus acidophilus (strain ATCC 700396 / NCK56 / N2 / NCFM).